The chain runs to 365 residues: tRNA dimethylallyltransferase (365 aa).

An ATP-binding site is contributed by 23 to 30 (APTASGKT). Residue 25–30 (TASGKT) coordinates substrate. 3 interaction with substrate tRNA regions span residues 48–51 (DSAL), 172–176 (QRITR), and 256–261 (RCVGYR).

It belongs to the IPP transferase family. In terms of assembly, monomer. The cofactor is Mg(2+).

The catalysed reaction is adenosine(37) in tRNA + dimethylallyl diphosphate = N(6)-dimethylallyladenosine(37) in tRNA + diphosphate. Functionally, catalyzes the transfer of a dimethylallyl group onto the adenine at position 37 in tRNAs that read codons beginning with uridine, leading to the formation of N6-(dimethylallyl)adenosine (i(6)A). The protein is tRNA dimethylallyltransferase of Psychrobacter sp. (strain PRwf-1).